The primary structure comprises 1254 residues: DNA-directed RNA polymerase subunit beta (1254 aa).

It belongs to the RNA polymerase beta chain family. In terms of assembly, the RNAP catalytic core consists of 2 alpha, 1 beta, 1 beta' and 1 omega subunit. When a sigma factor is associated with the core the holoenzyme is formed, which can initiate transcription.

It catalyses the reaction RNA(n) + a ribonucleoside 5'-triphosphate = RNA(n+1) + diphosphate. In terms of biological role, DNA-dependent RNA polymerase catalyzes the transcription of DNA into RNA using the four ribonucleoside triphosphates as substrates. The chain is DNA-directed RNA polymerase subunit beta from Protochlamydia amoebophila (strain UWE25).